The following is a 360-amino-acid chain: Phenylalanine--tRNA ligase alpha subunit (360 aa).

Glu-255 contributes to the Mg(2+) binding site.

Belongs to the class-II aminoacyl-tRNA synthetase family. Phe-tRNA synthetase alpha subunit type 1 subfamily. As to quaternary structure, tetramer of two alpha and two beta subunits. The cofactor is Mg(2+).

The protein resides in the cytoplasm. It catalyses the reaction tRNA(Phe) + L-phenylalanine + ATP = L-phenylalanyl-tRNA(Phe) + AMP + diphosphate + H(+). In Rhizorhabdus wittichii (strain DSM 6014 / CCUG 31198 / JCM 15750 / NBRC 105917 / EY 4224 / RW1) (Sphingomonas wittichii), this protein is Phenylalanine--tRNA ligase alpha subunit.